The primary structure comprises 162 residues: NADH-quinone oxidoreductase subunit I (162 aa).

2 consecutive 4Fe-4S ferredoxin-type domains span residues 52 to 82 and 93 to 122; these read LRRY…IEAG and VRYD…EGPN. [4Fe-4S] cluster is bound by residues cysteine 62, cysteine 65, cysteine 68, cysteine 72, cysteine 102, cysteine 105, cysteine 108, and cysteine 112.

This sequence belongs to the complex I 23 kDa subunit family. In terms of assembly, NDH-1 is composed of 14 different subunits. Subunits NuoA, H, J, K, L, M, N constitute the membrane sector of the complex. [4Fe-4S] cluster is required as a cofactor.

The protein localises to the cell inner membrane. The catalysed reaction is a quinone + NADH + 5 H(+)(in) = a quinol + NAD(+) + 4 H(+)(out). In terms of biological role, NDH-1 shuttles electrons from NADH, via FMN and iron-sulfur (Fe-S) centers, to quinones in the respiratory chain. The immediate electron acceptor for the enzyme in this species is believed to be ubiquinone. Couples the redox reaction to proton translocation (for every two electrons transferred, four hydrogen ions are translocated across the cytoplasmic membrane), and thus conserves the redox energy in a proton gradient. This is NADH-quinone oxidoreductase subunit I from Nitrobacter winogradskyi (strain ATCC 25391 / DSM 10237 / CIP 104748 / NCIMB 11846 / Nb-255).